We begin with the raw amino-acid sequence, 307 residues long: N-acetylmuramic acid 6-phosphate etherase (307 aa).

The 164-residue stretch at 59–222 (TADRLRQGGR…STGVMVKLGK (164 aa)) folds into the SIS domain. Glu87 serves as the catalytic Proton donor. Glu118 is a catalytic residue.

This sequence belongs to the GCKR-like family. MurNAc-6-P etherase subfamily. In terms of assembly, homodimer.

It carries out the reaction N-acetyl-D-muramate 6-phosphate + H2O = N-acetyl-D-glucosamine 6-phosphate + (R)-lactate. Its pathway is amino-sugar metabolism; N-acetylmuramate degradation. Specifically catalyzes the cleavage of the D-lactyl ether substituent of MurNAc 6-phosphate, producing GlcNAc 6-phosphate and D-lactate. The polypeptide is N-acetylmuramic acid 6-phosphate etherase (Trichormus variabilis (strain ATCC 29413 / PCC 7937) (Anabaena variabilis)).